Here is a 393-residue protein sequence, read N- to C-terminus: tRNA(Met) cytidine acetate ligase (393 aa).

3 residues coordinate ATP: G81, N142, and R167.

This sequence belongs to the TmcAL family.

It localises to the cytoplasm. The catalysed reaction is cytidine(34) in elongator tRNA(Met) + acetate + ATP = N(4)-acetylcytidine(34) in elongator tRNA(Met) + AMP + diphosphate. Its function is as follows. Catalyzes the formation of N(4)-acetylcytidine (ac(4)C) at the wobble position of elongator tRNA(Met), using acetate and ATP as substrates. First activates an acetate ion to form acetyladenylate (Ac-AMP) and then transfers the acetyl group to tRNA to form ac(4)C34. The sequence is that of tRNA(Met) cytidine acetate ligase from Bacillus cereus (strain ZK / E33L).